The following is a 680-amino-acid chain: DNA-directed RNA polymerase subunit beta' (680 aa).

Residues Cys69, Cys71, Cys87, and Cys90 each coordinate Zn(2+). Mg(2+) contacts are provided by Asp489, Asp491, and Asp493.

It belongs to the RNA polymerase beta' chain family. RpoC1 subfamily. In plastids the minimal PEP RNA polymerase catalytic core is composed of four subunits: alpha, beta, beta', and beta''. When a (nuclear-encoded) sigma factor is associated with the core the holoenzyme is formed, which can initiate transcription. Mg(2+) is required as a cofactor. It depends on Zn(2+) as a cofactor.

It localises to the plastid. It is found in the chloroplast. It carries out the reaction RNA(n) + a ribonucleoside 5'-triphosphate = RNA(n+1) + diphosphate. DNA-dependent RNA polymerase catalyzes the transcription of DNA into RNA using the four ribonucleoside triphosphates as substrates. The chain is DNA-directed RNA polymerase subunit beta' from Manihot esculenta (Cassava).